A 282-amino-acid polypeptide reads, in one-letter code: HTH-type transcriptional activator RhaR (282 aa).

An HTH araC/xylS-type domain is found at aspartate 179–leucine 277. 2 DNA-binding regions (H-T-H motif) span residues aspartate 196–threonine 217 and isoleucine 244–threonine 267.

In terms of assembly, binds DNA as a dimer.

It is found in the cytoplasm. In terms of biological role, activates expression of the rhaSR operon in response to L-rhamnose. The chain is HTH-type transcriptional activator RhaR from Shigella dysenteriae serotype 1 (strain Sd197).